The primary structure comprises 209 residues: Chloramphenicol acetyltransferase (209 aa).

The active site involves His78.

This sequence belongs to the transferase hexapeptide repeat family.

It catalyses the reaction chloramphenicol + acetyl-CoA = chloramphenicol 3-acetate + CoA. Its function is as follows. This enzyme is an effector of chloramphenicol resistance in bacteria. The sequence is that of Chloramphenicol acetyltransferase (cat) from Agrobacterium fabrum (strain C58 / ATCC 33970) (Agrobacterium tumefaciens (strain C58)).